The sequence spans 93 residues: MAEEHVVYIGKKPVMNYVLAVITQFNEGAKEVSIKARGRAISRAVDVAEIVRNRFLKDTVDIKEIKIGTEELPTADGRTTNTSTIEIVLERKV.

Lysine 11 is modified (N6-acetyllysine).

The protein belongs to the histone-like Alba family. Acetylated. Acetylation at Lys-11 decreases DNA-binding affinity.

It localises to the cytoplasm. The protein localises to the chromosome. Functionally, binds double-stranded DNA tightly but without sequence specificity. Involved in DNA compaction. The protein is DNA/RNA-binding protein Alba of Pyrococcus furiosus (strain ATCC 43587 / DSM 3638 / JCM 8422 / Vc1).